A 62-amino-acid chain; its full sequence is Protein DsrB (62 aa).

Belongs to the DsrB family.

The protein is Protein DsrB of Escherichia fergusonii (strain ATCC 35469 / DSM 13698 / CCUG 18766 / IAM 14443 / JCM 21226 / LMG 7866 / NBRC 102419 / NCTC 12128 / CDC 0568-73).